Reading from the N-terminus, the 264-residue chain is Endoglucanase S (264 aa).

The signal sequence occupies residues 1-32 (MQTVNTQPHRIFRVLLPAVFSSLLLSSLTVSA).

This sequence belongs to the glycosyl hydrolase 12 (cellulase H) family.

The catalysed reaction is Endohydrolysis of (1-&gt;4)-beta-D-glucosidic linkages in cellulose, lichenin and cereal beta-D-glucans.. In Pectobacterium parmentieri, this protein is Endoglucanase S (celS).